The following is a 119-amino-acid chain: Beta-2-microglobulin (119 aa).

The N-terminal stretch at 1–20 is a signal peptide; that stretch reads MARFVVVALLVLLSLSGLEA. The Ig-like C1-type domain maps to 25-114; the sequence is PKIQVYSRHP…VTLSTPKTVK (90 aa). An intrachain disulfide couples Cys-45 to Cys-100.

This sequence belongs to the beta-2-microglobulin family. Heterodimer of an alpha chain and a beta chain. Beta-2-microglobulin is the beta-chain of major histocompatibility complex class I molecules.

Its subcellular location is the secreted. In terms of biological role, component of the class I major histocompatibility complex (MHC). Involved in the presentation of peptide antigens to the immune system. In Aotus azarae (Azara's night monkey), this protein is Beta-2-microglobulin (B2M).